Here is a 57-residue protein sequence, read N- to C-terminus: Small polypeptide DEVIL 20 (57 aa).

Residue N5 is glycosylated (N-linked (GlcNAc...) asparagine). The interval 16 to 47 (TFKAKCSHMVRKQRAKFYILGRCLAMLVCGRG) is required for DVL/RTFL small polypeptide activity. Residues 29-45 (RAKFYILGRCLAMLVCG) traverse the membrane as a helical segment.

This sequence belongs to the DVL/RTFL small polypeptides family.

The protein localises to the cell membrane. Functionally, small polypeptide acting as a regulatory molecule which coordinates cellular responses required for differentiation, growth and development, probably by restricting polar cell proliferation in lateral organs and coordinating socket cell recruitment and differentiation at trichome sites. The protein is Small polypeptide DEVIL 20 of Arabidopsis thaliana (Mouse-ear cress).